A 154-amino-acid polypeptide reads, in one-letter code: uncharacterized protein (154 aa).

Its subcellular location is the mitochondrion. This is an uncharacterized protein from Arabidopsis thaliana (Mouse-ear cress).